The following is a 160-amino-acid chain: 17.9 kDa class II heat shock protein (160 aa).

The sHSP domain maps to 44 to 160; the sequence is DARAMAATPA…KPKTIQVQVA (117 aa).

It belongs to the small heat shock protein (HSP20) family.

It is found in the cytoplasm. In Helianthus annuus (Common sunflower), this protein is 17.9 kDa class II heat shock protein (HSP17.9).